The primary structure comprises 204 residues: Vacuolar protein-sorting-associated protein 46 (204 aa).

Residues 1-103 (MSRNSAAGLE…ASMGQVCKGM (103 aa)) form an interaction with VSP24 region. Position 5 is a phosphoserine (Ser-5). 2 coiled-coil regions span residues 9-56 (LENT…RIYA) and 109-129 (NMNL…FEDL). Residues 104-204 (DKALQNMNLQ…LAQRLRALRG (101 aa)) are interaction with VSP4. The interval 176–204 (NVPEIKAKEVNVDDEKEDKLAQRLRALRG) is interaction with VTA1. Over residues 185 to 196 (VNVDDEKEDKLA) the composition is skewed to basic and acidic residues. The tract at residues 185–204 (VNVDDEKEDKLAQRLRALRG) is disordered.

The protein belongs to the SNF7 family. Self-associates. Interacts with VPS4 and VTA1. Interacts with IST1.

The protein resides in the endosome membrane. It localises to the endomembrane system. Class E VPS protein implicated in concentration and sorting of cargo proteins of the multivesicular body (MVB) for incorporation into intralumenal vesicles. The lumenal sequestrated membrane proteins will be targeted into the vacuole after fusion of the endosome with the vacuole. Probably acts as a peripherally associated component of the ESCRT-III complex, which appears to be critical for late steps in MVB sorting, such as membrane invagination and final cargo sorting and recruits late-acting components of the sorting machinery. The MVB pathway requires the sequential function of ESCRT-O, -I,-II and -III complex assemblies. Regulates the membrane association of VPS4. Can stimulate VPS4 ATPase activity directly or via VTA1. The protein is Vacuolar protein-sorting-associated protein 46 (DID2) of Saccharomyces cerevisiae (strain ATCC 204508 / S288c) (Baker's yeast).